The following is a 326-amino-acid chain: Transcription factor WRKY45-1 (326 aa).

2 disordered regions span residues Gly67–Val114 and Gly252–Asp288. A DNA-binding region (WRKY) is located at residues Val112–Pro180. The span at Arg273–Gly283 shows a compositional bias: gly residues.

Belongs to the WRKY group III family. In terms of tissue distribution, expressed in aleurone cells.

The protein localises to the nucleus. Functionally, transcriptional activator involved in defense responses against pathogens. Acts as a positive regulator of defense responses against the rice blast fungus Magnaporthe oryzae. Acts through W-boxes, which are cis-elements that are enriched in the promoters of several defense-related genes. Plays an important role in the benzothiadiazole-induced disease resistance by mediating salicylic acid (SA) defense signaling pathway, independently of the disease resistance gene NPR1/NH1. Acts as a negative regulator of defense responses against the bacterial blight Xanthomonas oryzae pv oryzae (Xoo) and the bacterial streak Xanthomonas oryzae pv oryzicola (Xoc). Acts downstream of abscisic acid (ABA) signaling in response to the rice blast fungus. ABA is a negative regulator of defense responses that interacts antagonistically with salicylic acid (SA) signaling pathway. Acts as a negative regulator of ABA signaling that suppresses growth of seedlings. Does not seem to be involved in the regulation of salt stress response. Acts as a negative regulator of cold stress response. Acts as a negative regulator of drought stress response. This Oryza sativa subsp. japonica (Rice) protein is Transcription factor WRKY45-1.